Here is a 430-residue protein sequence, read N- to C-terminus: 3-phosphoshikimate 1-carboxyvinyltransferase (430 aa).

3-phosphoshikimate is bound by residues K20, S21, and R25. Residue K20 coordinates phosphoenolpyruvate. 2 residues coordinate phosphoenolpyruvate: G92 and R120. The 3-phosphoshikimate site is built by S166, Q168, D312, and K339. Residue Q168 coordinates phosphoenolpyruvate. The Proton acceptor role is filled by D312. R343 and R387 together coordinate phosphoenolpyruvate.

The protein belongs to the EPSP synthase family. In terms of assembly, monomer.

It localises to the cytoplasm. It carries out the reaction 3-phosphoshikimate + phosphoenolpyruvate = 5-O-(1-carboxyvinyl)-3-phosphoshikimate + phosphate. It participates in metabolic intermediate biosynthesis; chorismate biosynthesis; chorismate from D-erythrose 4-phosphate and phosphoenolpyruvate: step 6/7. In terms of biological role, catalyzes the transfer of the enolpyruvyl moiety of phosphoenolpyruvate (PEP) to the 5-hydroxyl of shikimate-3-phosphate (S3P) to produce enolpyruvyl shikimate-3-phosphate and inorganic phosphate. The polypeptide is 3-phosphoshikimate 1-carboxyvinyltransferase (Lactococcus lactis subsp. cremoris (strain MG1363)).